Consider the following 466-residue polypeptide: Cysteine--tRNA ligase (466 aa).

Cys-29 is a Zn(2+) binding site. Positions 31 to 41 (ATVQAAPHIGH) match the 'HIGH' region motif. Positions 208, 233, and 237 each coordinate Zn(2+). The 'KMSKS' region motif lies at 264–268 (KMSKS). Position 267 (Lys-267) interacts with ATP.

This sequence belongs to the class-I aminoacyl-tRNA synthetase family. As to quaternary structure, monomer. Requires Zn(2+) as cofactor.

It is found in the cytoplasm. It catalyses the reaction tRNA(Cys) + L-cysteine + ATP = L-cysteinyl-tRNA(Cys) + AMP + diphosphate. The sequence is that of Cysteine--tRNA ligase from Streptomyces avermitilis (strain ATCC 31267 / DSM 46492 / JCM 5070 / NBRC 14893 / NCIMB 12804 / NRRL 8165 / MA-4680).